Consider the following 200-residue polypeptide: Large ribosomal subunit protein uL4 (200 aa).

The interval 38 to 65 (GRQGSKAQKTRSEVSGGGKKPWRQKGTG) is disordered.

This sequence belongs to the universal ribosomal protein uL4 family. Part of the 50S ribosomal subunit.

One of the primary rRNA binding proteins, this protein initially binds near the 5'-end of the 23S rRNA. It is important during the early stages of 50S assembly. It makes multiple contacts with different domains of the 23S rRNA in the assembled 50S subunit and ribosome. Functionally, forms part of the polypeptide exit tunnel. This is Large ribosomal subunit protein uL4 from Pseudomonas aeruginosa (strain LESB58).